We begin with the raw amino-acid sequence, 118 residues long: Vesicle-associated membrane protein 1 (118 aa).

A compositionally biased stretch (low complexity) spans 1–15 (MSAPAQPPTEGAEGA). Positions 1 to 36 (MSAPAQPPTEGAEGAAPGGGPPGPPPNMTSNRRLQQ) are disordered. The Cytoplasmic segment spans residues 1 to 96 (MSAPAQPPTE…KRKYWWKNCK (96 aa)). Residues 33–93 (RLQQTQAQVE…AKLKRKYWWK (61 aa)) form the v-SNARE coiled-coil homology domain. Residue Ser-63 is modified to Phosphoserine. The helical; Anchor for type IV membrane protein transmembrane segment at 97–116 (MMIMLGAICAIIVVVIVIYF) threads the bilayer. Over 117–118 (FA) the chain is Vesicular.

Belongs to the synaptobrevin family. As to quaternary structure, interacts with VAPA and VAPB.

Its subcellular location is the cytoplasmic vesicle. The protein resides in the secretory vesicle. The protein localises to the synaptic vesicle membrane. It localises to the synapse. It is found in the synaptosome. Its subcellular location is the cytoplasmic vesicle membrane. Its function is as follows. Involved in the targeting and/or fusion of transport vesicles to their target membrane. This is Vesicle-associated membrane protein 1 (VAMP1) from Bos taurus (Bovine).